We begin with the raw amino-acid sequence, 470 residues long: Rhamnulokinase (470 aa).

12–16 provides a ligand contact to ATP; it reads ASSGR. Substrate is bound by residues A80 and 237-239; that span reads HDT. The active-site Proton acceptor is D238. Residue T259 coordinates ATP. N296 serves as a coordination point for substrate. Q304 is a binding site for ATP. C353 and C370 are joined by a disulfide. Residue G402 participates in ATP binding.

It belongs to the rhamnulokinase family. Mg(2+) is required as a cofactor.

The enzyme catalyses L-rhamnulose + ATP = L-rhamnulose 1-phosphate + ADP + H(+). The protein operates within carbohydrate degradation; L-rhamnose degradation; glycerone phosphate from L-rhamnose: step 2/3. Functionally, involved in the catabolism of L-rhamnose (6-deoxy-L-mannose). Catalyzes the transfer of the gamma-phosphate group from ATP to the 1-hydroxyl group of L-rhamnulose to yield L-rhamnulose 1-phosphate. This Oceanobacillus iheyensis (strain DSM 14371 / CIP 107618 / JCM 11309 / KCTC 3954 / HTE831) protein is Rhamnulokinase.